Here is a 96-residue protein sequence, read N- to C-terminus: Growth-regulated alpha protein (96 aa).

Residues 1 to 24 form the signal peptide; sequence MIPATRSLLCAALLLLATSRLATG. Disulfide bonds link cysteine 33–cysteine 59 and cysteine 35–cysteine 75.

Belongs to the intercrine alpha (chemokine CxC) family. Post-translationally, the N-terminal processed form KC(5-72) is produced by proteolytic cleavage after secretion from bone marrow stromal cells.

Its subcellular location is the secreted. In terms of biological role, has chemotactic activity for neutrophils. Contributes to neutrophil activation during inflammation. Hematoregulatory chemokine, which, in vitro, suppresses hematopoietic progenitor cell proliferation. KC(5-72) shows a highly enhanced hematopoietic activity. This is Growth-regulated alpha protein (Cxcl1) from Mus musculus (Mouse).